A 613-amino-acid polypeptide reads, in one-letter code: MMDGYAQEWPRLTHTDNGLAMDQLGGDLPLDVGFEPQTRARSNTWPCPRPENFVEPTDELDSTKASNQQLAPGDSQQAIQNANAAKKNSSRRNAWGNLSYADLITHAIGSATDKRLTLSQIYEWMVQNVPYFKDKGDSNSSAGWKNSIRHNLSLHNRFMRVQNEGTGKSSWWMLNPEAKPGKSVRRRAASMETSRYEKRRGRAKKRVEALRQAGVVGLNDATPSPSSSVSEGLDHFPESPLHSGGGFQLSPDFRQRASSNASSCGRLSPIRAQDLEPDWGFPVDYQNTTMTQAHAQALEELTGTMADELTLCNQQQQGFSAASGLPSQPPPPPYQPPQHQQAQQQQQQQSPYALNGPASGYNTLQPQSQCLLHRSLNCSCMHNARDGLSPNSVTTTMSPAYPNSEPSSDSLNTYSNVVLDGPADTAALMVQQQQQQQQQQQLSASLEGQCLEVLNNEAQPIDEFNLENFPVGNLECNVEELLQQEMSYGGLLDINIPLATVNTNLVNSSSGPLSISNISNLSNISSNSGSSLSLNQLQAQLQQQQQQQQAQQQQQAQQQQQQHQQHQQQLLLNNNNNSSSSLELATQTATTNLNARVQYSQPSVVTSPPSWVH.

4 disordered regions span residues 39-90, 182-205, 217-269, and 317-360; these read RARS…KNSS, KSVRRRAASMETSRYEKRRGRAKK, GLND…RLSP, and QGFS…PASG. Position 44 is a phosphothreonine; by PKB/AKT1 (Thr-44). The span at 63–80 shows a compositional bias: polar residues; it reads TKASNQQLAPGDSQQAIQ. The residue at position 75 (Ser-75) is a Phosphoserine. Low complexity predominate over residues 81–90; the sequence is NANAAKKNSS. A DNA-binding region (fork-head) is located at residues 95–201; it reads WGNLSYADLI…ETSRYEKRRG (107 aa). Ser-190 carries the phosphoserine; by PKB/AKT1 modification. Composition is skewed to polar residues over residues 221–230 and 256–265; these read ATPSPSSSVS and RASSNASSCG. Ser-259 bears the Phosphoserine; by PKB/AKT1 mark. A phosphoserine mark is found at Ser-262, Ser-263, and Ser-268. Residues 327 to 336 are compositionally biased toward pro residues; it reads SQPPPPPYQP. Over residues 337–353 the composition is skewed to low complexity; it reads PQHQQAQQQQQQQSPYA.

Interacts with melt.

Its subcellular location is the cytoplasm. It localises to the nucleus. Functionally, transcription factor involved in the regulation of the insulin signaling pathway. Consistently activates both the downstream target Thor\d4EBP and the feedback control target InR. Involved in negative regulation of the cell cycle, modulating cell growth and proliferation. In response to cellular stresses, such as nutrient deprivation or increased levels of reactive oxygen species, foxo is activated and inhibits growth through the action of target genes such as Thor. Foxo activated in the adult fat body can regulate lifespan in adults; an insulin peptide itself may function as one secondary messenger of insulin-regulated aging. Also regulates Lip4, homolog of human acid lipases, thereby acting as a key modulator of lipid metabolism by insulin signaling and integrates insulin responses to glucose and lipid homeostasis. The chain is Forkhead box protein O from Drosophila melanogaster (Fruit fly).